Here is a 138-residue protein sequence, read N- to C-terminus: Putative protein encoded by LINC02912 (138 aa).

A run of 2 helical transmembrane segments spans residues 32-52 and 65-85; these read FALSFLIGKMGIIILSVCLIC and CLINVSFSLYSCFIVFVTISQ. Positions 109-138 are disordered; the sequence is SGGQSQHSWPCPERSKNLPQVSKQLRNRAG.

It localises to the membrane. This chain is Putative protein encoded by LINC02912, found in Homo sapiens (Human).